The chain runs to 91 residues: Putative membrane protein insertion efficiency factor (91 aa).

The interval 66-91 is disordered; it reads GGVDPVPSCGCHSDKETTPKEKSDNA. The segment covering 77-91 has biased composition (basic and acidic residues); that stretch reads HSDKETTPKEKSDNA.

Belongs to the UPF0161 family.

The protein resides in the cell inner membrane. Functionally, could be involved in insertion of integral membrane proteins into the membrane. This Hydrogenovibrio crunogenus (strain DSM 25203 / XCL-2) (Thiomicrospira crunogena) protein is Putative membrane protein insertion efficiency factor.